Here is a 749-residue protein sequence, read N- to C-terminus: MQTSETGSDTGSTVTLQTSVASQAAVPTQVVQQVPVQQQVQQVQTVQQVQHVYPAQVQYVEGSDTVYTNGAIRTTTYPYTETQMYSQNTGGNYFDTQGSSAQVTTVVSSHSMVGTGGIQMGVTGGQLISSSGGTYLIGNSMENSGHSVTHTTRASPATIEMAIETLQKSDGLSTHRSSLLNSHLQWLLDNYETAEGVSLPRSTLYNHYLRHCQEHKLDPVNAASFGKLIRSIFMGLRTRRLGTRGNSKYHYYGIRVKPDSPLNRLQEDMQYMAMRQQPMQQKQRYKPMQKVDGVADGFTGSGQQTGTSVEQTVIAQSQHHQQFLDASRALPEFGEVEISSLPDGTTFEDIKSLQSLYREHCEAILDVVVNLQFSLIEKLWQTFWRYSPSTPTDGTTITESSNLSEIESRLPKAKLITLCKHESILKWMCNCDHGMYQALVEILIPDVLRPIPSALTQAIRNFAKSLEGWLSNAMNNIPQRMIQTKVAAVSAFAQTLRRYTSLNHLAQAARAVLQNTSQINQMLSDLNRVDFANVQEQASWVCQCDDNMVQRLETDFKMTLQQQSTLEQWAAWLDNVMMQALKPYEGRPSFPKAARQFLLKWSFYSSMVIRDLTLRSAASFGSFHLIRLLYDEYMFYLVEHRVAQATGETPIAVMGEFGDLNAVSPGNLDKDEGSEVESEMDEELDDSSEPQAKREKTELSQAFPVGCMQPVLETGVQPSLLNPIHSEHIVTSTQTIRQCSATGNTYTAV.

The RFX-type winged-helix DNA-binding region spans 183-258 (HLQWLLDNYE…YHYYGIRVKP (76 aa)). A disordered region spans residues 663–699 (VSPGNLDKDEGSEVESEMDEELDDSSEPQAKREKTEL). A compositionally biased stretch (acidic residues) spans 674 to 688 (SEVESEMDEELDDSS).

The protein belongs to the RFX family. Heterodimer; heterodimerizes with RFX1 and RFX2, and RFX6.

The protein localises to the nucleus. Functionally, transcription factor required for ciliogenesis and islet cell differentiation during endocrine pancreas development. Essential for the differentiation of nodal monocilia and left-right asymmetry specification during embryogenesis. Required for the biogenesis of motile cilia by governing growth and beating efficiency of motile cells. Also required for ciliated ependymal cell differentiation. Regulates the expression of genes involved in ciliary assembly (DYNC2LI1, FOXJ1 and BBS4) and genes involved in ciliary motility (DNAH11, DNAH9 and DNAH5). Together with RFX6, participates in the differentiation of 4 of the 5 islet cell types during endocrine pancreas development, with the exception of pancreatic PP (polypeptide-producing) cells. Regulates transcription by forming a heterodimer with another RFX protein and binding to the X-box in the promoter of target genes. Represses transcription of MAP1A in non-neuronal cells but not in neuronal cells. The protein is Transcription factor RFX3 (RFX3) of Homo sapiens (Human).